The sequence spans 626 residues: Endogenous retrovirus group S71 member 1 Env polyprotein (626 aa).

A signal peptide spans 1-38 (MGPEAWVRPLKTAPKPGEAIRLILFIYLSCFFLPVMSS). Residues 39 to 438 (EPSYSFLLTS…PPELHPRLHQ (400 aa)) are surface protein. Residues 39 to 575 (EPSYSFLLTS…FNWNPWLTTL (537 aa)) lie on the Extracellular side of the membrane. The CXXC signature appears at 302–305 (CWLC). Residues 439–459 (AVPLLVPLLAGLSIAGSAAIG) are fusion peptide. The tract at residues 439–626 (AVPLLVPLLA…KTQYDTLVNN (188 aa)) is transmembrane protein. A CKS-17 motif is present at residues 503–519 (LQNCRCLDLLFLSQGGL). C520 and C527 are disulfide-bonded. The short motif at 520–528 (CAALGESCC) is the CX6CC element. Residues 576 to 596 (ITGLAGPLLILLLSLIFGPCI) traverse the membrane as a helical segment. Residues 597–626 (LNSFLNFIKQRIASVKLTYLKTQYDTLVNN) lie on the Cytoplasmic side of the membrane.

It belongs to the gamma type-C retroviral envelope protein family. HERV class-I T env subfamily. In terms of processing, the CXXC motif is highly conserved across a broad range of retroviral envelope proteins. It is thought to participate in the formation of a labile disulfide bond possibly with the CX6CC motif present in the transmembrane domain. As to expression, expressed at higher level in thyroid. Expressed at lower level in adrenal, bone marrow, brain, breast, kidney, ovary, placenta, prostate, skin, testis and trachea.

It localises to the cell membrane. In terms of biological role, retroviral envelope proteins mediate receptor recognition and membrane fusion during early infection. Endogenous envelope proteins may have kept, lost or modified their original function during evolution. This endogenous envelope protein has lost its original fusogenic properties. This is Endogenous retrovirus group S71 member 1 Env polyprotein (ERVS71-1) from Homo sapiens (Human).